The chain runs to 595 residues: Transketolase-like protein 1 (595 aa).

93–95 (GWP) is a thiamine diphosphate binding site. Mg(2+)-binding residues include aspartate 125, asparagine 155, and isoleucine 157. Asparagine 155 contacts thiamine diphosphate. Thiamine diphosphate contacts are provided by lysine 217, glutamate 339, and phenylalanine 365. Glutamate 339 serves as the catalytic Proton donor. Residues histidine 389 and aspartate 397 each contribute to the substrate site. Position 401 (histidine 401) interacts with thiamine diphosphate.

It belongs to the transketolase family. Homodimer. The cofactor is Mg(2+). Requires Ca(2+) as cofactor. Mn(2+) serves as cofactor. Co(2+) is required as a cofactor. It depends on thiamine diphosphate as a cofactor. Not expressed in the embryonic neocortex.

The protein resides in the cytoplasm. It carries out the reaction D-sedoheptulose 7-phosphate + D-glyceraldehyde 3-phosphate = aldehydo-D-ribose 5-phosphate + D-xylulose 5-phosphate. In terms of biological role, catalyzes the transfer of a two-carbon ketol group from a ketose donor to an aldose acceptor, via a covalent intermediate with the cofactor thiamine pyrophosphate. The polypeptide is Transketolase-like protein 1 (Mus musculus (Mouse)).